The sequence spans 397 residues: Chorismate synthase (397 aa).

Residues arginine 40 and arginine 46 each coordinate NADP(+). Residues 129–131, 257–258, glycine 302, 317–321, and arginine 343 each bind FMN; these read RAS, QA, and KPIAT.

It belongs to the chorismate synthase family. In terms of assembly, homotetramer. It depends on FMNH2 as a cofactor.

The catalysed reaction is 5-O-(1-carboxyvinyl)-3-phosphoshikimate = chorismate + phosphate. It participates in metabolic intermediate biosynthesis; chorismate biosynthesis; chorismate from D-erythrose 4-phosphate and phosphoenolpyruvate: step 7/7. Its function is as follows. Catalyzes the anti-1,4-elimination of the C-3 phosphate and the C-6 proR hydrogen from 5-enolpyruvylshikimate-3-phosphate (EPSP) to yield chorismate, which is the branch point compound that serves as the starting substrate for the three terminal pathways of aromatic amino acid biosynthesis. This reaction introduces a second double bond into the aromatic ring system. In Prosthecochloris aestuarii (strain DSM 271 / SK 413), this protein is Chorismate synthase.